Here is a 338-residue protein sequence, read N- to C-terminus: UDP-glucose 4-epimerase (338 aa).

Residues Phe-11 to Ile-12, Asp-31 to Ser-36, Asp-58 to Ile-59, Phe-80 to Lys-84, Asn-99, Ser-124, Tyr-149, Lys-153, and Phe-178 contribute to the NAD(+) site. Substrate is bound by residues Ser-124 and Tyr-149. Residue Tyr-149 is the Proton acceptor of the active site. Residues Asn-179, Asn-199 to Leu-200, Ser-216 to Phe-218, Arg-231, and Arg-292 to Asp-295 each bind substrate.

The protein belongs to the NAD(P)-dependent epimerase/dehydratase family. In terms of assembly, homodimer. Requires NAD(+) as cofactor.

The catalysed reaction is UDP-alpha-D-glucose = UDP-alpha-D-galactose. It functions in the pathway carbohydrate metabolism; galactose metabolism. In terms of biological role, involved in the metabolism of galactose. Plays an essential role in the incorporation of galactose into meningococcal lipopolysaccharide surface molecules, which are important for pathogenesis. Catalyzes the conversion of UDP-galactose (UDP-Gal) to UDP-glucose (UDP-Glc) through a mechanism involving the transient reduction of NAD. In Neisseria gonorrhoeae, this protein is UDP-glucose 4-epimerase (galE).